Here is a 173-residue protein sequence, read N- to C-terminus: NADH-ubiquinone oxidoreductase chain 6 (173 aa).

5 helical membrane passes run 1 to 21 (MTYF…AVAS), 27 to 47 (YGVV…LSLG), 48 to 68 (VSFV…VVFV), 91 to 111 (GVGF…IGCL), and 141 to 161 (VGMF…VLEL).

The protein belongs to the complex I subunit 6 family.

The protein localises to the mitochondrion membrane. It catalyses the reaction a ubiquinone + NADH + 5 H(+)(in) = a ubiquinol + NAD(+) + 4 H(+)(out). Functionally, core subunit of the mitochondrial membrane respiratory chain NADH dehydrogenase (Complex I) that is believed to belong to the minimal assembly required for catalysis. Complex I functions in the transfer of electrons from NADH to the respiratory chain. The immediate electron acceptor for the enzyme is believed to be ubiquinone. The sequence is that of NADH-ubiquinone oxidoreductase chain 6 (MT-ND6) from Fratercula arctica (Atlantic puffin).